Here is a 368-residue protein sequence, read N- to C-terminus: F-box/kelch-repeat protein At5g51250 (368 aa).

The F-box domain occupies 1–44 (MSSLPDDLLLSIFARISRLYYPTLSLVSKSFRSLLASPDLYKAR). 3 Kelch repeats span residues 116–163 (DIYN…VLDR), 165–218 (IYVA…CIDG), and 260–304 (LFYI…YGGK).

The polypeptide is F-box/kelch-repeat protein At5g51250 (Arabidopsis thaliana (Mouse-ear cress)).